A 312-amino-acid polypeptide reads, in one-letter code: Methionyl-tRNA formyltransferase (312 aa).

109–112 (SLLP) lines the (6S)-5,6,7,8-tetrahydrofolate pocket.

The protein belongs to the Fmt family.

The catalysed reaction is L-methionyl-tRNA(fMet) + (6R)-10-formyltetrahydrofolate = N-formyl-L-methionyl-tRNA(fMet) + (6S)-5,6,7,8-tetrahydrofolate + H(+). Its function is as follows. Attaches a formyl group to the free amino group of methionyl-tRNA(fMet). The formyl group appears to play a dual role in the initiator identity of N-formylmethionyl-tRNA by promoting its recognition by IF2 and preventing the misappropriation of this tRNA by the elongation apparatus. The sequence is that of Methionyl-tRNA formyltransferase from Listeria monocytogenes serotype 4a (strain HCC23).